Here is a 405-residue protein sequence, read N- to C-terminus: Probable tRNA sulfurtransferase (405 aa).

Residues Val-60 to Asn-165 form the THUMP domain. Residues Met-183–Leu-184, His-208–Phe-209, Arg-265, Gly-287, and Gln-296 contribute to the ATP site.

It belongs to the ThiI family.

It is found in the cytoplasm. The catalysed reaction is [ThiI sulfur-carrier protein]-S-sulfanyl-L-cysteine + a uridine in tRNA + 2 reduced [2Fe-2S]-[ferredoxin] + ATP + H(+) = [ThiI sulfur-carrier protein]-L-cysteine + a 4-thiouridine in tRNA + 2 oxidized [2Fe-2S]-[ferredoxin] + AMP + diphosphate. The enzyme catalyses [ThiS sulfur-carrier protein]-C-terminal Gly-Gly-AMP + S-sulfanyl-L-cysteinyl-[cysteine desulfurase] + AH2 = [ThiS sulfur-carrier protein]-C-terminal-Gly-aminoethanethioate + L-cysteinyl-[cysteine desulfurase] + A + AMP + 2 H(+). Its pathway is cofactor biosynthesis; thiamine diphosphate biosynthesis. Catalyzes the ATP-dependent transfer of a sulfur to tRNA to produce 4-thiouridine in position 8 of tRNAs, which functions as a near-UV photosensor. Also catalyzes the transfer of sulfur to the sulfur carrier protein ThiS, forming ThiS-thiocarboxylate. This is a step in the synthesis of thiazole, in the thiamine biosynthesis pathway. The sulfur is donated as persulfide by IscS. The sequence is that of Probable tRNA sulfurtransferase from Streptococcus mutans serotype c (strain ATCC 700610 / UA159).